A 364-amino-acid polypeptide reads, in one-letter code: Nucleoside ABC transporter permease protein NupB (364 aa).

8 consecutive transmembrane segments (helical) span residues 9–29 (LVPL…MLAF), 77–99 (FNIG…ALSF), 105–125 (LLMI…MGFI), 138–158 (VITT…MIHS), 195–215 (TLNI…IIFT), 244–264 (LILS…VYGF), 284–304 (MAVA…ALLF), and 326–346 (VVTA…VMLP).

This sequence belongs to the binding-protein-dependent transport system permease family. The complex is composed of two ATP-binding proteins (NupA), two transmembrane proteins (NupB and NupC) and a solute-binding protein (BmpA).

The protein localises to the cell membrane. Part of an ABC transporter complex involved in the uptake of all common nucleosides. Responsible for the translocation of the substrate across the membrane. This is Nucleoside ABC transporter permease protein NupB from Lactococcus lactis subsp. cremoris (strain MG1363).